A 736-amino-acid chain; its full sequence is Oxysterol-binding protein-related protein 9 (736 aa).

Alanine 2 is subject to N-acetylalanine. The PH domain occupies 2–99; the sequence is ASIVEGPLSK…WIHALEETIL (98 aa). A disordered region spans residues 209–368; it reads LEPVISTMPS…RDDDGEAGSV (160 aa). Positions 253–274 are enriched in low complexity; the sequence is TPTPNSTGSGNSPPSSSLTPPS. Phosphoserine is present on residues serine 306, serine 324, serine 325, serine 326, and serine 329. 2 stretches are compositionally biased toward polar residues: residues 314–329 and 336–348; these read SSGS…SGNS and TESL…NGTS. Serine 611 carries the phosphoserine modification.

It belongs to the OSBP family. In terms of assembly, heterodimer with OSBPL11. Interacts with OSBPL10.

The protein localises to the late endosome membrane. It localises to the golgi apparatus. It is found in the trans-Golgi network membrane. It catalyses the reaction a 1,2-diacyl-sn-glycero-3-phospho-(1D-myo-inositol 4-phosphate)(out) + a 1,2-diacyl-sn-glycero-3-phospho-L-serine(in) = a 1,2-diacyl-sn-glycero-3-phospho-(1D-myo-inositol 4-phosphate)(in) + a 1,2-diacyl-sn-glycero-3-phospho-L-serine(out). Its function is as follows. Interacts with OSBPL11 to function as lipid transfer proteins. Together they form a heterodimer that localizes at the ER-trans-Golgi membrane contact sites, and exchanges phosphatidylserine (1,2-diacyl-sn-glycero-3-phospho-L-serine, PS) for phosphatidylinositol-4-phosphate (1,2-diacyl-sn-glycero-3-phospho-(1D-myo-inositol 4-phosphate), PI(4)P) between the two organelles, a step that is critical for sphingomyelin synthesis in the Golgi complex. The polypeptide is Oxysterol-binding protein-related protein 9 (Osbpl9) (Mus musculus (Mouse)).